Here is a 199-residue protein sequence, read N- to C-terminus: MGEAAKDQTEEVIQAWYLDNKEEDQKLPHHKDPKEFVSLDKLAELGVLCWRLDADNYETDEELKRIRESRGYSYMDLCEVCPEKLPNYEEKVKMFFEEHLHIDEEIRYCLAGSGYFDVRDLNDIWIRVWVKKGGLIVFPAGIYHRFTVDSDNYMKAMRLFVGGPVWTAYNRPHDHLPARKAYMKKFLKVIGDRNIDASA.

Fe(2+) contacts are provided by His99, His101, Glu105, and His144. Positions 99, 101, 105, and 144 each coordinate Ni(2+).

The protein belongs to the acireductone dioxygenase (ARD) family. Fe(2+) is required as a cofactor. Requires Ni(2+) as cofactor.

It localises to the cytoplasm. The protein localises to the nucleus. The catalysed reaction is 1,2-dihydroxy-5-(methylsulfanyl)pent-1-en-3-one + O2 = 4-methylsulfanyl-2-oxobutanoate + formate + 2 H(+). It catalyses the reaction 1,2-dihydroxy-5-(methylsulfanyl)pent-1-en-3-one + O2 = 3-(methylsulfanyl)propanoate + CO + formate + 2 H(+). The protein operates within amino-acid biosynthesis; L-methionine biosynthesis via salvage pathway; L-methionine from S-methyl-5-thio-alpha-D-ribose 1-phosphate: step 5/6. Functionally, catalyzes 2 different reactions between oxygen and the acireductone 1,2-dihydroxy-3-keto-5-methylthiopentene (DHK-MTPene) depending upon the metal bound in the active site. Fe-containing acireductone dioxygenase (Fe-ARD) produces formate and 2-keto-4-methylthiobutyrate (KMTB), the alpha-ketoacid precursor of methionine in the methionine recycle pathway. Ni-containing acireductone dioxygenase (Ni-ARD) produces methylthiopropionate, carbon monoxide and formate, and does not lie on the methionine recycle pathway. The chain is Acireductone dioxygenase 1 (ARD1) from Arabidopsis thaliana (Mouse-ear cress).